The following is a 447-amino-acid chain: Coagulation factor VII (447 aa).

The signal sequence occupies residues 1-23 (MLSQAWALALLCFLLSLWGSLPA). Residues 24 to 40 (VFLPQEQALSILHRPRR) constitute a propeptide that is removed on maturation. The region spanning 41–85 (ANGFLEELLPGSLERECREELCSFEEAHEIFRNEERTRQFWVSYN) is the Gla domain. 4-carboxyglutamate is present on residues Glu-46, Glu-47, Glu-54, Glu-56, Glu-59, Glu-60, Glu-65, Glu-66, Glu-69, Glu-74, and Glu-75. Cys-57 and Cys-62 form a disulfide bridge. Residues 86–122 (DGDQCASSPCQNGGSCEDQLRSYICFCPDGFEGRNCE) enclose the EGF-like 1; calcium-binding domain. 10 cysteine pairs are disulfide-bonded: Cys-90/Cys-101, Cys-95/Cys-110, Cys-112/Cys-121, Cys-131/Cys-142, Cys-138/Cys-152, Cys-154/Cys-167, Cys-175/Cys-302, Cys-199/Cys-204, Cys-218/Cys-234, and Cys-350/Cys-369. O-linked (Glc...) serine glycosylation is present at Ser-92. Ser-92 is a glycosylation site (O-linked (Glc...) serine; alternate). Ser-92 is a glycosylation site (O-linked (Xyl...) serine; alternate). Ser-100 is a glycosylation site (O-linked (Fuc) serine). The region spanning 127–168 (SQLICANDNGGCEQYCGADPGAGRFCWCHEGYALQADGVSCA) is the EGF-like 2 domain. A glycan (N-linked (GlcNAc...) asparagine) is linked at Asn-185. Residues 193-432 (IVGGHVCPKG…YTAWLRQLMG (240 aa)) enclose the Peptidase S1 domain. His-233 acts as the Charge relay system in catalysis. Asn-243 carries an N-linked (GlcNAc...) asparagine glycan. Catalysis depends on Asp-282, which acts as the Charge relay system. Asp-378 is a binding site for substrate. The cysteines at positions 380 and 408 are disulfide-linked. Ser-384 (charge relay system) is an active-site residue.

The protein belongs to the peptidase S1 family. In terms of assembly, heterodimer of a light chain and a heavy chain linked by a disulfide bond. The vitamin K-dependent, enzymatic carboxylation of some glutamate residues allows the modified protein to bind calcium. Post-translationally, O-glycosylated. O-fucosylated by POFUT1 on a conserved serine or threonine residue found in the consensus sequence C2-X(4,5)-[S/T]-C3 of EGF domains, where C2 and C3 are the second and third conserved cysteines. In terms of processing, can be either O-glucosylated or O-xylosylated at Ser-92 by POGLUT1. Plasma.

The protein localises to the secreted. It catalyses the reaction Selective cleavage of Arg-|-Ile bond in factor X to form factor Xa.. Its function is as follows. Initiates the extrinsic pathway of blood coagulation. Serine protease that circulates in the blood in a zymogen form. Factor VII is converted to factor VIIa by factor Xa, factor XIIa, factor IXa, or thrombin by minor proteolysis. In the presence of tissue factor and calcium ions, factor VIIa then converts factor X to factor Xa by limited proteolysis. Factor VIIa also converts factor IX to factor IXa in the presence of tissue factor and calcium. In Bos taurus (Bovine), this protein is Coagulation factor VII (F7).